The sequence spans 254 residues: Methylthioribulose-1-phosphate dehydratase (254 aa).

Residue cysteine 110 participates in substrate binding. Zn(2+) is bound by residues histidine 127 and histidine 129. Glutamate 156 serves as the catalytic Proton donor/acceptor. Histidine 212 serves as a coordination point for Zn(2+).

Belongs to the aldolase class II family. MtnB subfamily. The cofactor is Zn(2+).

It is found in the cytoplasm. It carries out the reaction 5-(methylsulfanyl)-D-ribulose 1-phosphate = 5-methylsulfanyl-2,3-dioxopentyl phosphate + H2O. It functions in the pathway amino-acid biosynthesis; L-methionine biosynthesis via salvage pathway; L-methionine from S-methyl-5-thio-alpha-D-ribose 1-phosphate: step 2/6. Catalyzes the dehydration of methylthioribulose-1-phosphate (MTRu-1-P) into 2,3-diketo-5-methylthiopentyl-1-phosphate (DK-MTP-1-P). The polypeptide is Methylthioribulose-1-phosphate dehydratase (Talaromyces marneffei (strain ATCC 18224 / CBS 334.59 / QM 7333) (Penicillium marneffei)).